The chain runs to 151 residues: Protein SprT-like (151 aa).

A SprT-like domain is found at 7–147; it reads QKLTESISES…GKCKGKLHLH (141 aa). Zn(2+) is bound at residue His-67. Glu-68 is an active-site residue. Residue His-71 participates in Zn(2+) binding.

The protein belongs to the SprT family. The cofactor is Zn(2+).

It is found in the cytoplasm. The sequence is that of Protein SprT-like from Staphylococcus carnosus (strain TM300).